Here is a 523-residue protein sequence, read N- to C-terminus: Major facilitator-type transporter psiT2 (523 aa).

Residues 1-26 show a composition bias toward polar residues; the sequence is MSLERSTSPNPTERTSLLSDTASTIS. Positions 1–45 are disordered; sequence MSLERSTSPNPTERTSLLSDTASTISSRDDVEQSSLKQRRTPIPT. Transmembrane regions (helical) follow at residues 88–108, 125–145, 149–169, 175–195, and 221–241; these read FYSG…IFML, ALGI…TMML, VCAG…SELT, ALVV…GPLI, and FLPS…GYFF. Asn-269 is a glycosylation site (N-linked (GlcNAc...) asparagine). 3 helical membrane passes run 317 to 337, 352 to 372, and 382 to 402; these read FLMF…FTAV, AFSV…PWVL, and HFCM…NPLA. Asn-410 is a glycosylation site (N-linked (GlcNAc...) asparagine). 3 helical membrane-spanning segments follow: residues 419–439, 455–474, and 488–508; these read GLLY…VMAF, LATA…AFCP, and NILG…VGVW.

Belongs to the major facilitator superfamily. TCR/Tet family.

Its subcellular location is the membrane. Major facilitator-type transporter; part of the gene cluster that mediates the biosynthesis of psilocybin, a psychotropic tryptamine-derived natural product. The polypeptide is Major facilitator-type transporter psiT2 (Psilocybe cubensis (Psychedelic mushroom)).